Consider the following 336-residue polypeptide: Tetraacyldisaccharide 4'-kinase (336 aa).

An ATP-binding site is contributed by 60 to 67 (TVGGTGKT).

Belongs to the LpxK family.

The catalysed reaction is a lipid A disaccharide + ATP = a lipid IVA + ADP + H(+). Its pathway is glycolipid biosynthesis; lipid IV(A) biosynthesis; lipid IV(A) from (3R)-3-hydroxytetradecanoyl-[acyl-carrier-protein] and UDP-N-acetyl-alpha-D-glucosamine: step 6/6. Its function is as follows. Transfers the gamma-phosphate of ATP to the 4'-position of a tetraacyldisaccharide 1-phosphate intermediate (termed DS-1-P) to form tetraacyldisaccharide 1,4'-bis-phosphate (lipid IVA). In Pseudomonas fluorescens (strain Pf0-1), this protein is Tetraacyldisaccharide 4'-kinase.